The chain runs to 79 residues: Small ribosomal subunit protein bS16 (79 aa).

The protein belongs to the bacterial ribosomal protein bS16 family.

This chain is Small ribosomal subunit protein bS16, found in Marinobacter nauticus (strain ATCC 700491 / DSM 11845 / VT8) (Marinobacter aquaeolei).